Reading from the N-terminus, the 214-residue chain is Adenylate kinase (214 aa).

10 to 15 is a binding site for ATP; the sequence is GAGKGT. The segment at 30-59 is NMP; the sequence is STGDMLRAAIKEGTPLGLEAKKVMDAGQLI. AMP is bound by residues Thr-31, Arg-36, 57 to 59, 85 to 88, and Gln-92; these read QLI and GFPR. Residues 122-159 form an LID region; it reads GRRVHPGSGRVYHVVYNPPKVADKDNETGEELIIRADD. Residues Arg-123 and 132-133 contribute to the ATP site; that span reads VY. Residues Arg-156 and Arg-167 each contribute to the AMP site. Gln-200 contacts ATP.

The protein belongs to the adenylate kinase family. Monomer.

It is found in the cytoplasm. It carries out the reaction AMP + ATP = 2 ADP. The protein operates within purine metabolism; AMP biosynthesis via salvage pathway; AMP from ADP: step 1/1. Catalyzes the reversible transfer of the terminal phosphate group between ATP and AMP. Plays an important role in cellular energy homeostasis and in adenine nucleotide metabolism. This is Adenylate kinase from Pseudoalteromonas translucida (strain TAC 125).